Reading from the N-terminus, the 953-residue chain is Translation initiation factor IF-2 (953 aa).

2 disordered regions span residues 52 to 247 (KASK…LAEL) and 279 to 363 (TKLK…TERK). Composition is skewed to basic and acidic residues over residues 80–89 (TGSEHVEKTQ), 98–111 (FKAE…EQAA), and 140–188 (QGDK…ENHK). A compositionally biased stretch (polar residues) spans 191–207 (RFTNQKKQGRQEPQSKS). A compositionally biased stretch (basic and acidic residues) spans 229-247 (RQSETRFRAQQEAKRLAEL). Positions 282–291 (KSSNISAKST) are enriched in polar residues. The segment covering 300–317 (ARPEKNRELTHHSQEGQK) has biased composition (basic and acidic residues). A compositionally biased stretch (low complexity) spans 322–338 (SWNSQNQVRNQKNSNWN). Residues 339–348 (KNKKTKKGKN) show a composition bias toward basic residues. A tr-type G domain is found at 454-623 (ERAPVVTIMG…LLVAEVEELK (170 aa)). Residues 463 to 470 (GHVDHGKT) are G1. 463 to 470 (GHVDHGKT) contacts GTP. Residues 488–492 (GITQH) are G2. Positions 509–512 (DTPG) are G3. GTP is bound by residues 509–513 (DTPGH) and 563–566 (NKID). The interval 563 to 566 (NKID) is G4. A G5 region spans residues 599-601 (SAK).

It belongs to the TRAFAC class translation factor GTPase superfamily. Classic translation factor GTPase family. IF-2 subfamily.

It is found in the cytoplasm. Functionally, one of the essential components for the initiation of protein synthesis. Protects formylmethionyl-tRNA from spontaneous hydrolysis and promotes its binding to the 30S ribosomal subunits. Also involved in the hydrolysis of GTP during the formation of the 70S ribosomal complex. The sequence is that of Translation initiation factor IF-2 from Streptococcus pyogenes serotype M5 (strain Manfredo).